The primary structure comprises 209 residues: Kynurenine formamidase (209 aa).

Trp18 contributes to the substrate binding site. Zn(2+)-binding residues include His48, His52, and Asp54. The active-site Proton donor/acceptor is His58. Zn(2+)-binding residues include His160 and Glu172.

The protein belongs to the Cyclase 1 superfamily. KynB family. In terms of assembly, homodimer. The cofactor is Zn(2+).

The catalysed reaction is N-formyl-L-kynurenine + H2O = L-kynurenine + formate + H(+). Its pathway is amino-acid degradation; L-tryptophan degradation via kynurenine pathway; L-kynurenine from L-tryptophan: step 2/2. Catalyzes the hydrolysis of N-formyl-L-kynurenine to L-kynurenine, the second step in the kynurenine pathway of tryptophan degradation. This is Kynurenine formamidase from Maricaulis maris (strain MCS10) (Caulobacter maris).